A 227-amino-acid polypeptide reads, in one-letter code: Glutathione S-transferase U17 (227 aa).

One can recognise a GST N-terminal domain in the interval 4–83 (SDVKLIGAWA…YIDDTWSSSG (80 aa)). Residues 14-15 (SP), 40-41 (SK), 54-55 (KI), and 67-68 (ES) each bind glutathione. The region spanning 90–222 (DPYDRAMARF…KLAEFAKKIF (133 aa)) is the GST C-terminal domain.

The protein belongs to the GST superfamily. Tau family.

The protein resides in the cytoplasm. It localises to the cytosol. It carries out the reaction RX + glutathione = an S-substituted glutathione + a halide anion + H(+). Its function is as follows. Involved in light signaling, mainly phyA-mediated photomorphogenesis and in the integration of various phytohormone signals to modulate various aspects of plant development by affecting glutathione pools. In vitro, possesses glutathione S-transferase activity toward 1-chloro-2,4-dinitrobenzene (CDNB) and benzyl isothiocyanate (BITC). This chain is Glutathione S-transferase U17 (GSTU17), found in Arabidopsis thaliana (Mouse-ear cress).